Consider the following 122-residue polypeptide: Protein POLR1D, isoform 2 (122 aa).

Methionine 1 carries the N-acetylmethionine modification. The disordered stretch occupies residues 48–122; the sequence is INTIKNTLPS…DKYEKRSNRR (75 aa). Residues 57–83 are compositionally biased toward basic and acidic residues; that stretch reads SHKEQDHEQKEGDKEPAKSQAQKEENP. Residues 84–96 show a composition bias toward basic residues; that stretch reads KKHRSHPYKHSFR. Serine 104 carries the post-translational modification Phosphoserine. Positions 110-122 are enriched in basic and acidic residues; it reads SSQDKYEKRSNRR.

This chain is Protein POLR1D, isoform 2 (POLR1D), found in Homo sapiens (Human).